The sequence spans 451 residues: Tubulin alpha chain (451 aa).

Position 11 (Q11) interacts with GTP. Residue K40 is modified to N6-acetyllysine. E71, G144, T145, T179, N206, and N228 together coordinate GTP. Residue E71 participates in Mg(2+) binding. E254 is a catalytic residue.

Belongs to the tubulin family. As to quaternary structure, dimer of alpha and beta chains. A typical microtubule is a hollow water-filled tube with an outer diameter of 25 nm and an inner diameter of 15 nM. Alpha-beta heterodimers associate head-to-tail to form protofilaments running lengthwise along the microtubule wall with the beta-tubulin subunit facing the microtubule plus end conferring a structural polarity. Microtubules usually have 13 protofilaments but different protofilament numbers can be found in some organisms and specialized cells. The cofactor is Mg(2+). In terms of processing, undergoes a tyrosination/detyrosination cycle, the cyclic removal and re-addition of a C-terminal tyrosine residue by the enzymes tubulin tyrosine carboxypeptidase (TTCP) and tubulin tyrosine ligase (TTL), respectively. Post-translationally, acetylation of alpha chains at Lys-40 stabilizes microtubules and affects affinity and processivity of microtubule motors. This modification has a role in multiple cellular functions, ranging from cell motility, cell cycle progression or cell differentiation to intracellular trafficking and signaling.

The protein resides in the cytoplasm. It localises to the cytoskeleton. The catalysed reaction is GTP + H2O = GDP + phosphate + H(+). Tubulin is the major constituent of microtubules, a cylinder consisting of laterally associated linear protofilaments composed of alpha- and beta-tubulin heterodimers. Microtubules grow by the addition of GTP-tubulin dimers to the microtubule end, where a stabilizing cap forms. Below the cap, tubulin dimers are in GDP-bound state, owing to GTPase activity of alpha-tubulin. The chain is Tubulin alpha chain (TUBA) from Chlorella vulgaris (Green alga).